A 108-amino-acid polypeptide reads, in one-letter code: uncharacterized protein (108 aa).

Belongs to the UPF0440 family.

This is an uncharacterized protein from Thermococcus kodakarensis (strain ATCC BAA-918 / JCM 12380 / KOD1) (Pyrococcus kodakaraensis (strain KOD1)).